Consider the following 122-residue polypeptide: Large ribosomal subunit protein bL12 (122 aa).

This sequence belongs to the bacterial ribosomal protein bL12 family. Homodimer. Part of the ribosomal stalk of the 50S ribosomal subunit. Forms a multimeric L10(L12)X complex, where L10 forms an elongated spine to which 2 to 4 L12 dimers bind in a sequential fashion. Binds GTP-bound translation factors.

In terms of biological role, forms part of the ribosomal stalk which helps the ribosome interact with GTP-bound translation factors. Is thus essential for accurate translation. This is Large ribosomal subunit protein bL12 from Mycoplasma pneumoniae (strain ATCC 29342 / M129 / Subtype 1) (Mycoplasmoides pneumoniae).